The primary structure comprises 336 residues: Glycerol-3-phosphate dehydrogenase [NAD(P)+] (336 aa).

Ser-11, Trp-12, Arg-32, Arg-33, and Lys-110 together coordinate NADPH. Residues Lys-110 and Gly-140 each contribute to the sn-glycerol 3-phosphate site. Ala-144 is a binding site for NADPH. The sn-glycerol 3-phosphate site is built by Lys-195, Asp-248, Ser-258, Arg-259, and Asn-260. The active-site Proton acceptor is the Lys-195. Arg-259 contributes to the NADPH binding site. NADPH contacts are provided by Val-284 and Glu-286.

This sequence belongs to the NAD-dependent glycerol-3-phosphate dehydrogenase family.

It is found in the cytoplasm. It catalyses the reaction sn-glycerol 3-phosphate + NAD(+) = dihydroxyacetone phosphate + NADH + H(+). The enzyme catalyses sn-glycerol 3-phosphate + NADP(+) = dihydroxyacetone phosphate + NADPH + H(+). The protein operates within membrane lipid metabolism; glycerophospholipid metabolism. Functionally, catalyzes the reduction of the glycolytic intermediate dihydroxyacetone phosphate (DHAP) to sn-glycerol 3-phosphate (G3P), the key precursor for phospholipid synthesis. This chain is Glycerol-3-phosphate dehydrogenase [NAD(P)+], found in Nocardia farcinica (strain IFM 10152).